We begin with the raw amino-acid sequence, 183 residues long: ATP-dependent protease subunit HslV (183 aa).

Residue threonine 7 is part of the active site. Na(+) contacts are provided by glycine 162, cysteine 165, and threonine 168.

It belongs to the peptidase T1B family. HslV subfamily. In terms of assembly, a double ring-shaped homohexamer of HslV is capped on each side by a ring-shaped HslU homohexamer. The assembly of the HslU/HslV complex is dependent on binding of ATP.

Its subcellular location is the cytoplasm. The catalysed reaction is ATP-dependent cleavage of peptide bonds with broad specificity.. With respect to regulation, allosterically activated by HslU binding. In terms of biological role, protease subunit of a proteasome-like degradation complex believed to be a general protein degrading machinery. In Alkalilimnicola ehrlichii (strain ATCC BAA-1101 / DSM 17681 / MLHE-1), this protein is ATP-dependent protease subunit HslV.